Consider the following 551-residue polypeptide: Arginine--tRNA ligase (551 aa).

The 'HIGH' region motif lies at 125-135 (ANPTGPLHIGH).

The protein belongs to the class-I aminoacyl-tRNA synthetase family. As to quaternary structure, monomer.

The protein localises to the cytoplasm. The enzyme catalyses tRNA(Arg) + L-arginine + ATP = L-arginyl-tRNA(Arg) + AMP + diphosphate. The sequence is that of Arginine--tRNA ligase from Oleidesulfovibrio alaskensis (strain ATCC BAA-1058 / DSM 17464 / G20) (Desulfovibrio alaskensis).